We begin with the raw amino-acid sequence, 346 residues long: Sesquiterpene synthase Agr1 (346 aa).

Mg(2+) is bound by residues aspartate 98, asparagine 234, serine 238, and glutamate 242. Residues 98–102 (DNLSD) carry the DDXXD motif motif. (2E,6E)-farnesyl diphosphate-binding residues include arginine 322 and tyrosine 323.

This sequence belongs to the terpene synthase family. Requires Mg(2+) as cofactor.

It carries out the reaction (2E,6E)-farnesyl diphosphate = delta-cadinene + diphosphate. The enzyme catalyses (2E,6E)-farnesyl diphosphate = alpha-muurolene + diphosphate. It catalyses the reaction (2E,6E)-farnesyl diphosphate = gamma-muurolene + diphosphate. The catalysed reaction is (2E,6E)-farnesyl diphosphate = alpha-selinene + diphosphate. Terpene cyclase that catalyzes the cyclization of farnesyl diphosphate (FPP) to various sesquiterpenes, including alpha-muurolene, gamma-muurolene, alpha-selinene, beta-selinene, delta-cadinene, alpha-cadinol and delta-cadinol. Delta-cadinene is the major product of Agr1. The protein is Sesquiterpene synthase Agr1 of Cyclocybe aegerita (Black poplar mushroom).